A 144-amino-acid chain; its full sequence is 3-hydroxyacyl-[acyl-carrier-protein] dehydratase FabZ (144 aa).

H48 is an active-site residue.

Belongs to the thioester dehydratase family. FabZ subfamily.

The protein localises to the cytoplasm. The enzyme catalyses a (3R)-hydroxyacyl-[ACP] = a (2E)-enoyl-[ACP] + H2O. Its function is as follows. Involved in unsaturated fatty acids biosynthesis. Catalyzes the dehydration of short chain beta-hydroxyacyl-ACPs and long chain saturated and unsaturated beta-hydroxyacyl-ACPs. This Bacillus cytotoxicus (strain DSM 22905 / CIP 110041 / 391-98 / NVH 391-98) protein is 3-hydroxyacyl-[acyl-carrier-protein] dehydratase FabZ.